Reading from the N-terminus, the 205-residue chain is Peptidyl-tRNA hydrolase (205 aa).

Tyr18 lines the tRNA pocket. His23 acts as the Proton acceptor in catalysis. TRNA contacts are provided by Tyr69, Asn71, and Asn117.

The protein belongs to the PTH family. In terms of assembly, monomer.

The protein localises to the cytoplasm. It catalyses the reaction an N-acyl-L-alpha-aminoacyl-tRNA + H2O = an N-acyl-L-amino acid + a tRNA + H(+). Functionally, hydrolyzes ribosome-free peptidyl-tRNAs (with 1 or more amino acids incorporated), which drop off the ribosome during protein synthesis, or as a result of ribosome stalling. Its function is as follows. Catalyzes the release of premature peptidyl moieties from peptidyl-tRNA molecules trapped in stalled 50S ribosomal subunits, and thus maintains levels of free tRNAs and 50S ribosomes. In Synechococcus sp. (strain CC9605), this protein is Peptidyl-tRNA hydrolase.